Reading from the N-terminus, the 351-residue chain is Protein EXPRESSION OF TERPENOIDS 1 (351 aa).

The tract at residues 1-23 (MANFFSLGGNQEQQHQEISSSQA) is disordered. Residues 11–22 (QEQQHQEISSSQ) are compositionally biased toward low complexity. Zn(2+) contacts are provided by cysteine 129, cysteine 132, cysteine 140, cysteine 145, cysteine 149, and cysteine 156. Residues 129–156 (CQDCGNQAKKDCQHMRCRTCCKSRGFQC) constitute a DNA-binding region (zn(2)-C6 fungal-type; degenerate). The disordered stretch occupies residues 170 to 219 (RRERQQQLAALQQQQQGHNNNNNNHKNKRQREDPSASSLVSTRLPSNTNG). Positions 175–193 (QQLAALQQQQQGHNNNNNN) are enriched in low complexity. Residues 204-219 (SASSLVSTRLPSNTNG) are compositionally biased toward polar residues. A Required for homo- and heterodimerization motif is present at residues 258–261 (IGGH). Residues 286-320 (TSSGGSAGGVQHHHHNSAAVATATTTSGGDATAAG) are disordered. Over residues 303–320 (AAVATATTTSGGDATAAG) the composition is skewed to low complexity.

The protein belongs to the SHI protein family. In terms of assembly, forms homodimers and heterodimers with LRP1.

The protein localises to the nucleus. Transcription activator involved in the transcriptional regulation of terpene biosynthesis in glandular trichomes. Binds to the promoter of the linalool synthase TPS5 and promotes TPS5 gene transactivation. Acts synergistically with MYC1 in the transactivation of TPS5. This is Protein EXPRESSION OF TERPENOIDS 1 from Solanum lycopersicum (Tomato).